The following is a 217-amino-acid chain: UPF0323 lipoprotein HPSH_01205 (217 aa).

An N-terminal signal peptide occupies residues 1–27; the sequence is MKKPYRKISDYAIVGGLSALVMVSIVG. Cys-28 is lipidated: N-palmitoyl cysteine. The S-diacylglycerol cysteine moiety is linked to residue Cys-28. Positions 160 to 171 are enriched in polar residues; it reads QRTYKSPQAYQR. The segment at 160–217 is disordered; sequence QRTYKSPQAYQRSQNSFSKSAPSASSMGGASKGQSGFFGSSRPTSSPAVSSGTRGFNS. Low complexity predominate over residues 172-210; that stretch reads SQNSFSKSAPSASSMGGASKGQSGFFGSSRPTSSPAVSS.

The protein belongs to the UPF0323 family.

It is found in the cell membrane. In Helicobacter pylori (strain Shi470), this protein is UPF0323 lipoprotein HPSH_01205.